The primary structure comprises 433 residues: 3-deoxy-D-manno-octulosonic acid transferase (433 aa).

Residues 11 to 31 (TFLYDCFLIFAFMVGLPRILY) form a helical; Signal-anchor membrane-spanning segment. The active-site Proton acceptor is E70. CMP is bound by residues 277 to 278 (PR), 317 to 319 (IGW), and 344 to 347 (NLLE).

It belongs to the glycosyltransferase group 1 family. Glycosyltransferase 30 subfamily.

The protein localises to the cell inner membrane. It carries out the reaction lipid IVA (E. coli) + CMP-3-deoxy-beta-D-manno-octulosonate = alpha-Kdo-(2-&gt;6)-lipid IVA (E. coli) + CMP + H(+). It catalyses the reaction alpha-Kdo-(2-&gt;6)-lipid IVA (E. coli) + CMP-3-deoxy-beta-D-manno-octulosonate = alpha-Kdo-(2-&gt;4)-alpha-Kdo-(2-&gt;6)-lipid IVA (E. coli) + CMP + H(+). The catalysed reaction is alpha-Kdo-(2-&gt;4)-alpha-Kdo-(2-&gt;6)-lipid IVA (E. coli) + CMP-3-deoxy-beta-D-manno-octulosonate = alpha-Kdo-(2-&gt;8)-alpha-Kdo-(2-&gt;4)-alpha-Kdo-(2-&gt;6)-lipid IVA (E. coli) + CMP + H(+). The enzyme catalyses alpha-Kdo-(2-&gt;8)-alpha-Kdo-(2-&gt;4)-alpha-Kdo-(2-&gt;6)-lipid IVA (E. coli) + CMP-3-deoxy-beta-D-manno-octulosonate = alpha-Kdo-(2-&gt;8)-[alpha-Kdo-(2-&gt;4)]-alpha-Kdo-(2-&gt;4)-alpha-Kdo-(2-&gt;6)-lipid IVA + CMP + H(+). It functions in the pathway bacterial outer membrane biogenesis; LPS core biosynthesis. Involved in lipopolysaccharide (LPS) biosynthesis. Catalyzes the transfer of predominantly four 3-deoxy-D-manno-octulosonate (Kdo) residues from CMP-Kdo to lipid IV(A), the tetraacyldisaccharide-1,4'-bisphosphate precursor of lipid A. Thus generates the genus-specific LPS epitope of Chlamydia, composed of the trisaccharide alpha-Kdo-(2-&gt;8)-alpha-Kdo-(2-&gt;4)-alpha-Kdo. The polypeptide is 3-deoxy-D-manno-octulosonic acid transferase (waaA) (Chlamydophila psittaci (strain ATCC VR-125 / 6BC) (Chlamydia psittaci)).